The chain runs to 334 residues: L-lactate dehydrogenase B chain (334 aa).

Alanine 2 carries the N-acetylalanine modification. Lysine 7 carries the post-translational modification N6-acetyllysine. Position 31 to 53 (31 to 53) interacts with NAD(+); that stretch reads QVGMACAISILGKSLADELALVD. Serine 44 carries the phosphoserine modification. Lysine 58 bears the N6-acetyllysine mark. Arginine 100 lines the NAD(+) pocket. Arginine 107 is a binding site for substrate. Residue lysine 119 is modified to N6-acetyllysine. Asparagine 139 contacts NAD(+). Positions 139 and 170 each coordinate substrate. Histidine 194 serves as the catalytic Proton acceptor. Residue tyrosine 240 is modified to Phosphotyrosine. Threonine 249 is a substrate binding site. The residue at position 329 (lysine 329) is an N6-acetyllysine.

This sequence belongs to the LDH/MDH superfamily. LDH family. As to quaternary structure, homotetramer. Interacts with PTEN upstream reading frame protein MP31; the interaction leads to inhibition of mitochondrial lactate dehydrogenase activity, preventing conversion of lactate to pyruvate in mitochondria. Predominantly expressed in aerobic tissues such as cardiac muscle.

The protein localises to the cytoplasm. The protein resides in the mitochondrion inner membrane. The enzyme catalyses (S)-lactate + NAD(+) = pyruvate + NADH + H(+). It functions in the pathway fermentation; pyruvate fermentation to lactate; (S)-lactate from pyruvate: step 1/1. Interconverts simultaneously and stereospecifically pyruvate and lactate with concomitant interconversion of NADH and NAD(+). The protein is L-lactate dehydrogenase B chain (LDHB) of Homo sapiens (Human).